Here is a 683-residue protein sequence, read N- to C-terminus: Long-chain fatty acid transport protein 3 (683 aa).

Residues 3–23 (ALLLLPLLLLLPLLLLKLHLW) traverse the membrane as a helical segment. Residues 119–128 (GGDSGEGSAG) are compositionally biased toward gly residues. The segment at 119–145 (GGDSGEGSAGEGERAAPGAGDAAAGSG) is disordered. Residues 133–145 (AAPGAGDAAAGSG) are compositionally biased toward low complexity. Residues 288–292 (TSGTT), His331, Thr428, Asp528, Arg543, and Lys635 each bind ATP.

It belongs to the ATP-dependent AMP-binding enzyme family. As to expression, expressed in bronchial and bronchiolar epithelial cells (at protein level).

The protein localises to the mitochondrion membrane. It catalyses the reaction a fatty acid(in) = a fatty acid(out). It carries out the reaction a long-chain fatty acid + ATP + CoA = a long-chain fatty acyl-CoA + AMP + diphosphate. The catalysed reaction is hexadecanoate + ATP + CoA = hexadecanoyl-CoA + AMP + diphosphate. The enzyme catalyses (9Z)-octadecenoate + ATP + CoA = (9Z)-octadecenoyl-CoA + AMP + diphosphate. It catalyses the reaction (9Z,12Z)-octadecadienoate + ATP + CoA = (9Z,12Z)-octadecadienoyl-CoA + AMP + diphosphate. It carries out the reaction (5Z,8Z,11Z,14Z)-eicosatetraenoate + ATP + CoA = (5Z,8Z,11Z,14Z)-eicosatetraenoyl-CoA + AMP + diphosphate. The catalysed reaction is a very long-chain fatty acid + ATP + CoA = a very long-chain fatty acyl-CoA + AMP + diphosphate. The enzyme catalyses tetracosanoate + ATP + CoA = tetracosanoyl-CoA + AMP + diphosphate. In terms of biological role, mainly functions as an acyl-CoA ligase catalyzing the ATP-dependent formation of fatty acyl-CoA using LCFA and very-long-chain fatty acids (VLCFA) as substrates. Can mediate the levels of long-chain fatty acids (LCFA) in the cell by facilitating their transport across membranes. In Homo sapiens (Human), this protein is Long-chain fatty acid transport protein 3.